The chain runs to 165 residues: Bark lectin isoform 1 (165 aa).

Residues N27 and N57 are each glycosylated (N-linked (GlcNAc...) asparagine). Disulfide bonds link C33–C80 and C126–C133.

It belongs to the protease inhibitor I3 (leguminous Kunitz-type inhibitor) family. As to quaternary structure, dimer.

Glucose and N-acetylglucosamine binding lectin. Has hemagglutinating activity against human and rabbit erythrocytes which does not require divalent cations. Inhibits factor Xa and, to a lesser extent, trypsin. Does not inhibit neutrophil elastase, human plasma kallikrein, papain, human plasmin, porcine pancreatic kallikrein and bovin chymotrypsin. Has insecticidal activity against the termite species N.corniger. Induces apoptosis in prostrate cancer cell lines DU145 and PC3. This Crateva tapia (Garlic-pear tree) protein is Bark lectin isoform 1.